The sequence spans 534 residues: Allene oxide synthase 1, chloroplastic (534 aa).

Disordered stretches follow at residues 1 to 31 (MAST…SSYR) and 43 to 71 (EIPP…LPAQ). The N-terminal 69 residues, 1 to 69 (MASTSLSLPS…SPPVKQAKLP (69 aa)), are a transit peptide targeting the chloroplast. Low complexity-rich tracts occupy residues 17–31 (SHTS…SSYR) and 43–62 (EIPP…SSPP). Residues K149, H180, and K184 each contribute to the heme b site. Residues N337 and K343 each contribute to the (13S)-hydroperoxy-(9Z,11E)-octadecadienoate site. N337 serves as a coordination point for (13S)-hydroperoxy-(9Z,11E,15Z)-octadecatrienoate. Heme b-binding residues include K485 and C487.

The protein belongs to the cytochrome P450 family. It depends on heme b as a cofactor. As to expression, expressed in flowers. Detected in stems and roots, but not in leaves and fruits under non-inducing conditions.

Its subcellular location is the plastid. The protein localises to the chloroplast. It catalyses the reaction (13S)-hydroperoxy-(9Z,11E,15Z)-octadecatrienoate = (9Z,13S,15Z)-12,13-epoxyoctadeca-9,11,15-trienoate + H2O. It carries out the reaction (13S)-hydroperoxy-(9Z,11E)-octadecadienoate = (9Z,13S)-12,13-epoxyoctadeca-9,11-dienoate + H2O. Functionally, cytochrome P450 of the CYP74A subfamily involved in the biosynthesis of jasmonic acid from lipoxygenase-derived hydroperoxides of free fatty acids. Catalyzes the synthesis of unstable allene oxide, which is further converted spontaneously by hydrolysis or cyclization. Can use 13S-hydroperoxy-9(Z),11(E),15(Z)-octadecatrienoic acid (13-HPOT) and 13S-hydroperoxy-9(Z),11(E)-octadecadienoic acid (13-HPOD) as substrates. The polypeptide is Allene oxide synthase 1, chloroplastic (Solanum lycopersicum (Tomato)).